Reading from the N-terminus, the 186-residue chain is MEAFSSKDMAMQAQKKILSRMASKSVAQMFIDDNSSEVLDELYRVSKEHSGNRAEAQKVVKNMIKIAVKVGVLFRHEKFSAEELSIAQEFRKKLHHGAMTAISFQEVEFTFDKSVMINLLSDCRDLLLKLVEKHLTPKSLDRIRHVFNHYSNPELLTHLYDPQGNLWSNLSKICSGLNRMIEEGKL.

This sequence belongs to the TNFAIP8 family. TNFAIP8L2 subfamily.

Its function is as follows. Acts as a negative regulator of innate and adaptive immunity by maintaining immune homeostasis. Negative regulator of Toll-like receptor and T-cell receptor function. Prevents hyperresponsiveness of the immune system and maintains immune homeostasis. Inhibits jun/ap1 and NF-kappa-B activation. Promotes Fas-induced apoptosis. The polypeptide is Tumor necrosis factor, alpha-induced protein 8-like protein 2 A (tnfaip8l2a) (Danio rerio (Zebrafish)).